Here is a 339-residue protein sequence, read N- to C-terminus: MTSQRSLSSPQTRRPSVMGLISLVGSIVLLFLLIFRASTWACLFCFTTYEERLRVCQLFVGREETKINLCRNELEGAFEDLKDMKINYDERSYLHDEFTQMTVSLQEKAARRREPFWLAFKDAAAKLKRTIEHLKKAPACIPPCGLQEVARLFHCSGCFSKLCDLPLDCPVQDMLVNRGDQALFSCIVAFELPESEITYSWKFVGGVRTKDVTYFRDMPGAHGYLARIRPVQPKHGGTFSCVILHDQRPLARLYFYLNVTGPPPPEDTELQVTFREVMNRTPAEPEMIQPWSPSLGELLTNPQALTLGNLFLLAATAALGSASVTLLVWLFFRWYLSGN.

The first 41 residues, 1 to 41 (MTSQRSLSSPQTRRPSVMGLISLVGSIVLLFLLIFRASTWA), serve as a signal peptide directing secretion. The short motif at 42–45 (CLFC) is the CXXC motif element. Intrachain disulfides connect Cys-42–Cys-155, Cys-45–Cys-158, Cys-56–Cys-70, Cys-140–Cys-163, Cys-144–Cys-169, and Cys-186–Cys-241. The Extracellular portion of the chain corresponds to 42-310 (CLFCFTTYEE…NPQALTLGNL (269 aa)). Residues 155-158 (CSGC) carry the CXXC motif motif. One can recognise an Ig-like domain in the interval 166–251 (PLDCPVQDML…VILHDQRPLA (86 aa)). N-linked (GlcNAc...) asparagine glycosylation is present at Asn-258. Residues 311 to 331 (FLLAATAALGSASVTLLVWLF) form a helical membrane-spanning segment. The Cytoplasmic segment spans residues 332–339 (FRWYLSGN).

Belongs to the SPACA6 family. As to quaternary structure, forms a complex with IZUMO1 and TMEM81 on spermatocyte cell membrane required for fertilization. Highly expressed in testis. Minor expression also detected in epididymis, seminal vesicle and ovary. Predominantly expressed in testicular germ cells during spermiogenesis. Most abundant in round spermatids and detected at lower levels in elongating spermatids.

The protein resides in the cytoplasmic vesicle. Its subcellular location is the secretory vesicle. It is found in the acrosome membrane. In terms of biological role, sperm protein required for fusion of sperm with the egg membrane during fertilization. May regulate the expression of sperm surface protein DCST2. This chain is Sperm acrosome membrane-associated protein 6, found in Mus musculus (Mouse).